A 271-amino-acid chain; its full sequence is Keratin-associated protein 10-5 (271 aa).

22 repeat units span residues 26–30, 51–55, 73–77, 78–82, 88–92, 93–97, 98–102, 110–114, 120–124, 130–134, 135–139, 140–144, 152–156, 162–166, 177–181, 187–191, 199–203, 209–213, 214–218, 233–237, 240–244, and 251–255. Positions 26 to 255 are 22 X 5 AA repeats of C-C-X(3); the sequence is CCEPPCGTAP…SYQASCCRPA (230 aa).

The protein belongs to the KRTAP type 10 family. Interacts with hair keratins. In terms of tissue distribution, restricted to a narrow region of the hair fiber cuticle, lying approximately 20 cell layers above the apex of the dermal papilla of the hair root; not detected in any other tissues.

In the hair cortex, hair keratin intermediate filaments are embedded in an interfilamentous matrix, consisting of hair keratin-associated proteins (KRTAP), which are essential for the formation of a rigid and resistant hair shaft through their extensive disulfide bond cross-linking with abundant cysteine residues of hair keratins. The matrix proteins include the high-sulfur and high-glycine-tyrosine keratins. The protein is Keratin-associated protein 10-5 (KRTAP10-5) of Homo sapiens (Human).